A 1354-amino-acid polypeptide reads, in one-letter code: Eukaryotic translation initiation factor 3 subunit A (1354 aa).

At K68 the chain carries N6-acetyllysine. The stretch at 82–120 forms a coiled coil; the sequence is NIKSLEDVVRAYLKLAEEKTEAAKEESQQMVLDIEDLDN. A PCI domain is found at 315–498; it reads MQRMSTRVLL…RTLSFGSDLN (184 aa). A phosphoserine mark is found at S492 and S584. The segment at 664–835 is interaction with EIF3B; it reads LDPDFIMAKQ…REERERAERA (172 aa). Disordered regions lie at residues 809–844, 866–1249, and 1262–1354; these read EKEE…LREY, EERE…RDRD, and DLRD…TVRR. Basic and acidic residues-rich tracts occupy residues 866–1136, 1148–1249, 1262–1302, and 1310–1343; these read EERE…DDAR, GWRE…RDRD, DLRD…DPPR, and SRER…TKNE. S895 carries the post-translational modification Phosphoserine. The stretch at 924–931 is one 1; truncated repeat; that stretch reads DDERPHRR. The interval 924 to 1143 is 22 X 10 AA approximate tandem repeats of [DA]-[DE]-[ED]-R-[PLIGFSV]-[RPS]-[RW]-[RL]-[GNIHT]-[DGLPTAM]; the sequence is DDERPHRRDE…DARPGPWRPF (220 aa). Copy 2 of the repeat occupies 932–941; the sequence is DEDRLRRLGG. Residues 942–951 form a 3; approximate repeat; it reads DDEERESSLR. At S949 the chain carries Phosphoserine. Repeat copies occupy residues 953–962, 963–972, 973–982, 983–992, 993–1002, 1003–1012, 1013–1022, 1023–1032, 1033–1042, 1043–1052, 1053–1062, 1064–1073, 1074–1083, 1084–1093, 1094–1103, 1104–1113, 1114–1123, and 1124–1133. S1038 is subject to Phosphoserine. Residues 1134-1143 form a 22; approximate repeat; sequence DARPGPWRPF. Residues S1159 and S1233 each carry the phosphoserine modification. Phosphoserine occurs at positions 1310 and 1336.

The protein belongs to the eIF-3 subunit A family. In terms of assembly, component of the eukaryotic translation initiation factor 3 (eIF-3) complex, which is composed of 13 subunits: EIF3A, EIF3B, EIF3C, EIF3D, EIF3E, EIF3F, EIF3G, EIF3H, EIF3I, EIF3J, EIF3K, EIF3L and EIF3M. The eIF-3 complex appears to include 3 stable modules: module A is composed of EIF3A, EIF3B, EIF3G and EIF3I; module B is composed of EIF3F, EIF3H, and EIF3M; and module C is composed of EIF3C, EIF3D, EIF3E, EIF3L and EIF3K. EIF3C of module C binds EIF3B of module A and EIF3H of module B, thereby linking the three modules. EIF3J is a labile subunit that binds to the eIF-3 complex via EIF3B. The eIF-3 complex interacts with RPS6KB1 under conditions of nutrient depletion. Mitogenic stimulation leads to binding and activation of a complex composed of MTOR and RPTOR, leading to phosphorylation and release of RPS6KB1 and binding of EIF4B to eIF-3. Interacts with EIF4G1. Also interacts with KRT7 and PIWIL2. In terms of processing, phosphorylated. Phosphorylation is enhanced upon serum stimulation.

It is found in the cytoplasm. In terms of biological role, RNA-binding component of the eukaryotic translation initiation factor 3 (eIF-3) complex, which is required for several steps in the initiation of protein synthesis. The eIF-3 complex associates with the 40S ribosome and facilitates the recruitment of eIF-1, eIF-1A, eIF-2:GTP:methionyl-tRNAi and eIF-5 to form the 43S pre-initiation complex (43S PIC). The eIF-3 complex stimulates mRNA recruitment to the 43S PIC and scanning of the mRNA for AUG recognition. The eIF-3 complex is also required for disassembly and recycling of post-termination ribosomal complexes and subsequently prevents premature joining of the 40S and 60S ribosomal subunits prior to initiation. The eIF-3 complex specifically targets and initiates translation of a subset of mRNAs involved in cell proliferation, including cell cycling, differentiation and apoptosis, and uses different modes of RNA stem-loop binding to exert either translational activation or repression. The sequence is that of Eukaryotic translation initiation factor 3 subunit A (Eif3a) from Rattus norvegicus (Rat).